Here is a 121-residue protein sequence, read N- to C-terminus: MSAESFNIVHIRENKLLARRELLVEAVHQNASTPTRQSVREWVAKQLGIDISNVFVRRIKTEFGRGRSLAEVHVYNDSKIARVIEPLYILARNLGEEGKKLLEEAKKRRNERREKKKRKKK.

This sequence belongs to the eukaryotic ribosomal protein eS24 family.

This Pyrobaculum aerophilum (strain ATCC 51768 / DSM 7523 / JCM 9630 / CIP 104966 / NBRC 100827 / IM2) protein is Small ribosomal subunit protein eS24.